Consider the following 452-residue polypeptide: Probable diguanylate cyclase DgcT (452 aa).

Over 1–7 (MEKDYLR) the chain is Cytoplasmic. Residues 8–28 (ISSTVLVSLLFGLALVLVNSW) form a helical membrane-spanning segment. Residues 29–45 (FNQPGVEEVVPRSTYLM) lie on the Periplasmic side of the membrane. Residues 46–66 (VMIALFFIDTVAFIFMQLYFI) form a helical membrane-spanning segment. Residues 67–74 (YDRRQFSN) lie on the Cytoplasmic side of the membrane. Residues 75–95 (CVLSLAFLSCLIYFVITVIII) form a helical membrane-spanning segment. Topologically, residues 96-111 (QQIIEERLTSSVVQND) are periplasmic. The chain crosses the membrane as a helical span at residues 112–132 (IAIYYLFRQMSLCILIFLALV). Residues 133-148 (NKVSENTKQRNLFSKK) lie on the Cytoplasmic side of the membrane. A helical membrane pass occupies residues 149–169 (MTLCISLFFVFGGPIVAHILS). Over 170–195 (SHYESYNLHIAELTNENGQVVWKASY) the chain is Periplasmic. The chain crosses the membrane as a helical span at residues 196–216 (VTIMIFMWLTLLSVNLYFNGL). The Cytoplasmic segment spans residues 217–219 (RYD). Residues 220-240 (IWNGVTVIAFCAVLYNISLLF) traverse the membrane as a helical segment. Over 241–254 (MSRYSVSTWYISRT) the chain is Periplasmic. A helical membrane pass occupies residues 255-275 (IEVVSKLTVMVIFMCHIFSAL). At 276-452 (RVTKNIAHRD…RDVVNFCESP (177 aa)) the chain is on the cytoplasmic side. Residues 310–445 (TPYCVMIMDI…GRNKVVVRDV (136 aa)) form the GGDEF domain. Aspartate 318 and isoleucine 319 together coordinate Mg(2+). Substrate is bound by residues asparagine 326, histidine 331, and aspartate 335. A Mg(2+)-binding site is contributed by glutamate 361. Catalysis depends on glutamate 361, which acts as the Proton acceptor. Arginine 381 contacts substrate.

Homodimer. Mg(2+) serves as cofactor.

It is found in the cell inner membrane. It catalyses the reaction 2 GTP = 3',3'-c-di-GMP + 2 diphosphate. The protein operates within purine metabolism; 3',5'-cyclic di-GMP biosynthesis. In terms of biological role, probably catalyzes the synthesis of cyclic-di-GMP (c-di-GMP) via the condensation of 2 GTP molecules. Overexpression leads to a strong repression of swimming; swimming returns to normal when residues 359-360 are both mutated to Ala. Overexpression also leads to a 20-fold increase in c-di-GMP levels in vivo. Cyclic-di-GMP is a second messenger which controls cell surface-associated traits in bacteria. This is Probable diguanylate cyclase DgcT from Escherichia coli (strain K12).